The following is a 1157-amino-acid chain: ATP-dependent helicase/deoxyribonuclease subunit B (1157 aa).

The UvrD-like helicase ATP-binding domain maps to 1–275 (MTLHAYLGRA…QYFNQLYRFN (275 aa)). Residue 8–15 (GRAGTGKS) participates in ATP binding. One can recognise a UvrD-like helicase C-terminal domain in the interval 269 to 583 (NQLYRFNNQD…SIGTMDLAKV (315 aa)). [4Fe-4S] cluster-binding residues include Cys784, Cys1112, Cys1115, and Cys1121.

The protein belongs to the helicase family. AddB/RexB type 1 subfamily. Heterodimer of AddA and AddB. Mg(2+) serves as cofactor. Requires [4Fe-4S] cluster as cofactor.

Its function is as follows. The heterodimer acts as both an ATP-dependent DNA helicase and an ATP-dependent, dual-direction single-stranded exonuclease. Recognizes the chi site generating a DNA molecule suitable for the initiation of homologous recombination. The AddB subunit has 5' -&gt; 3' nuclease activity but not helicase activity. This chain is ATP-dependent helicase/deoxyribonuclease subunit B, found in Staphylococcus aureus (strain JH9).